Reading from the N-terminus, the 270-residue chain is L-aspartate dehydrogenase (270 aa).

NAD(+) contacts are provided by A123 and N191. H221 is a catalytic residue.

Belongs to the L-aspartate dehydrogenase family.

The catalysed reaction is L-aspartate + NADP(+) + H2O = oxaloacetate + NH4(+) + NADPH + H(+). The enzyme catalyses L-aspartate + NAD(+) + H2O = oxaloacetate + NH4(+) + NADH + H(+). It functions in the pathway cofactor biosynthesis; NAD(+) biosynthesis; iminoaspartate from L-aspartate (dehydrogenase route): step 1/1. Specifically catalyzes the NAD or NADP-dependent dehydrogenation of L-aspartate to iminoaspartate. The sequence is that of L-aspartate dehydrogenase from Methanocella arvoryzae (strain DSM 22066 / NBRC 105507 / MRE50).